The chain runs to 227 residues: MSKRSNRSNNKNNTNKFNIENWEPKTELGRKVKDGEITDIDQILDKGLPIMELEIVDALLPDLEEEVMDVNLVQRMHKSGRKVNFRVIVAVGNRNGYVGLGQGKSQEVGPAIRKAVDAAKYNLIKVRRGCGDWGCGCGRRHTVPFKIEGKMSSVSATLIPAPAGVGLAIGNVGKTILSLAGIADVWSMCSGQTQTTINFAGAVFDALKQLSSVKSSEKDLKALGVID.

The interval 1 to 22 (MSKRSNRSNNKNNTNKFNIENW) is disordered. Low complexity predominate over residues 7–18 (RSNNKNNTNKFN). Residues 63–126 (LEEEVMDVNL…DAAKYNLIKV (64 aa)) enclose the S5 DRBM domain.

It belongs to the universal ribosomal protein uS5 family. As to quaternary structure, part of the 30S ribosomal subunit. Contacts protein S4.

Its function is as follows. With S4 and S12 plays an important role in translational accuracy. The sequence is that of Small ribosomal subunit protein uS5 from Methanosphaera stadtmanae (strain ATCC 43021 / DSM 3091 / JCM 11832 / MCB-3).